A 237-amino-acid polypeptide reads, in one-letter code: Ribonuclease PH (237 aa).

Phosphate is bound by residues Arg86 and 124–126; that span reads GTR.

Belongs to the RNase PH family. Homohexameric ring arranged as a trimer of dimers.

The catalysed reaction is tRNA(n+1) + phosphate = tRNA(n) + a ribonucleoside 5'-diphosphate. Functionally, phosphorolytic 3'-5' exoribonuclease that plays an important role in tRNA 3'-end maturation. Removes nucleotide residues following the 3'-CCA terminus of tRNAs; can also add nucleotides to the ends of RNA molecules by using nucleoside diphosphates as substrates, but this may not be physiologically important. Probably plays a role in initiation of 16S rRNA degradation (leading to ribosome degradation) during starvation. This is Ribonuclease PH from Shewanella woodyi (strain ATCC 51908 / MS32).